Consider the following 555-residue polypeptide: Glutamine--tRNA ligase (555 aa).

The 'HIGH' region motif lies at 35 to 45 (PEPNGYLHIGH). Residues 36 to 38 (EPN) and 42 to 48 (HIGHAKS) contribute to the ATP site. Residues aspartate 68 and tyrosine 213 each coordinate L-glutamine. Residues threonine 232 and 262 to 263 (RL) each bind ATP. Residues 269-273 (ITSKR) carry the 'KMSKS' region motif.

It belongs to the class-I aminoacyl-tRNA synthetase family. Monomer.

Its subcellular location is the cytoplasm. The catalysed reaction is tRNA(Gln) + L-glutamine + ATP = L-glutaminyl-tRNA(Gln) + AMP + diphosphate. The sequence is that of Glutamine--tRNA ligase from Azotobacter vinelandii (strain DJ / ATCC BAA-1303).